A 210-amino-acid chain; its full sequence is Cell division protein FtsQ (210 aa).

A POTRA domain is found at L1–R58. The helical transmembrane segment at V8–I25 threads the bilayer.

It belongs to the FtsQ/DivIB family. FtsQ subfamily.

It localises to the cell inner membrane. Functionally, essential cell division protein. The polypeptide is Cell division protein FtsQ (Rhizobium radiobacter (Agrobacterium tumefaciens)).